A 416-amino-acid polypeptide reads, in one-letter code: Trehalose synthase (416 aa).

It belongs to the glycosyltransferase group 1 family. Glycosyltransferase 4 subfamily. As to quaternary structure, homodimer. Requires Mg(2+) as cofactor.

It carries out the reaction an NDP-alpha-D-glucose + D-glucose = alpha,alpha-trehalose + a ribonucleoside 5'-diphosphate + H(+). With respect to regulation, inhibited by 20 mM Fe(3+) and Mn(2+). Partially inhibited by Zn(2+) and Ni(2+). Activity is slightly enhanced by 2 mM Fe (3+), Mn (2+), Ca(2+) or Li(+) and by 20 mM Mg(2+), Ca(2+) or Li(+). Its function is as follows. Synthesizes trehalose from ADP-glucose and glucose. The reaction is reversible, the equilibrium strongly favors trehalose synthesis. This chain is Trehalose synthase, found in Rubrobacter xylanophilus (strain DSM 9941 / JCM 11954 / NBRC 16129 / PRD-1).